The chain runs to 1564 residues: Abnormal spindle-like microcephaly-associated protein homolog (1564 aa).

IQ domains are found at residues 31–60 (YLWA…MLKS), 220–251 (LKKN…VIIQ), 270–299 (TRSA…SVIK), 293–322 (ILTS…ATIK), 366–395 (MRES…AVIS), 389–420 (QRKA…IIIQ), 439–468 (VKKA…AAVK), 462–491 (QSVA…SIIK), 512–541 (AKAA…AAMK), 535–566 (EHQA…LVIQ), 608–639 (QHTC…LLIQ), 658–687 (TKAA…AAIT), 681–712 (CNTA…IIIQ), 731–762 (LKKT…TFIK), 754–785 (MHRA…IVIQ), 804–835 (ILKA…TLIQ), 827–856 (LRIA…ITRT), 877–908 (LRHS…TLIQ), 900–931 (MHIA…IWIQ), 949–980 (LQNA…AFIQ), 972–1003 (MHRA…VVIQ), 1022–1053 (QRYS…ILIQ), 1045–1076 (MYFS…IFIQ), 1095–1126 (LRKA…VLIQ), 1168–1199 (QWHS…IIIQ), 1304–1333 (HTQA…AATR), 1327–1358 (MHLA…VIIQ), 1377–1406 (VQKS…EKMA), 1452–1483 (QSRA…RIQS), 1474–1503 (QKCA…QKRA), and 1500–1531 (QKRA…VVLQ).

The protein resides in the cytoplasm. It is found in the nucleus. Functionally, probable role in mitotic spindle regulation and coordination of mitotic processes. May have a preferential role in regulating neurogenesis. The polypeptide is Abnormal spindle-like microcephaly-associated protein homolog (ASPM) (Ateles geoffroyi (Black-handed spider monkey)).